Reading from the N-terminus, the 249-residue chain is 5'-nucleotidase SurE (249 aa).

A divalent metal cation-binding residues include D8, D9, S39, and N91.

Belongs to the SurE nucleotidase family. It depends on a divalent metal cation as a cofactor.

It is found in the cytoplasm. The enzyme catalyses a ribonucleoside 5'-phosphate + H2O = a ribonucleoside + phosphate. Functionally, nucleotidase that shows phosphatase activity on nucleoside 5'-monophosphates. This chain is 5'-nucleotidase SurE, found in Vesicomyosocius okutanii subsp. Calyptogena okutanii (strain HA).